The sequence spans 121 residues: Small ribosomal subunit protein uS13 (121 aa).

Residues 91–121 (HKRGLPVRGQRTRTNARTRKGPRRAAASLKK) form a disordered region.

The protein belongs to the universal ribosomal protein uS13 family. Part of the 30S ribosomal subunit. Forms a loose heterodimer with protein S19. Forms two bridges to the 50S subunit in the 70S ribosome.

Functionally, located at the top of the head of the 30S subunit, it contacts several helices of the 16S rRNA. In the 70S ribosome it contacts the 23S rRNA (bridge B1a) and protein L5 of the 50S subunit (bridge B1b), connecting the 2 subunits; these bridges are implicated in subunit movement. Contacts the tRNAs in the A and P-sites. The polypeptide is Small ribosomal subunit protein uS13 (Bordetella petrii (strain ATCC BAA-461 / DSM 12804 / CCUG 43448)).